A 449-amino-acid polypeptide reads, in one-letter code: NADH-quinone oxidoreductase subunit H (449 aa).

A run of 9 helical transmembrane segments spans residues phenylalanine 26–phenylalanine 46, proline 96–isoleucine 116, leucine 136–leucine 156, isoleucine 177–threonine 197, tryptophan 211–asparagine 231, phenylalanine 259–phenylalanine 279, tryptophan 298–leucine 318, phenylalanine 330–alanine 350, and tryptophan 365–glycine 385. Positions alanine 396–serine 449 are disordered.

It belongs to the complex I subunit 1 family. NDH-1 is composed of 14 different subunits. Subunits NuoA, H, J, K, L, M, N constitute the membrane sector of the complex.

It localises to the cell membrane. The catalysed reaction is a quinone + NADH + 5 H(+)(in) = a quinol + NAD(+) + 4 H(+)(out). NDH-1 shuttles electrons from NADH, via FMN and iron-sulfur (Fe-S) centers, to quinones in the respiratory chain. The immediate electron acceptor for the enzyme in this species is believed to be ubiquinone. Couples the redox reaction to proton translocation (for every two electrons transferred, four hydrogen ions are translocated across the cytoplasmic membrane), and thus conserves the redox energy in a proton gradient. This subunit may bind ubiquinone. This Frankia alni (strain DSM 45986 / CECT 9034 / ACN14a) protein is NADH-quinone oxidoreductase subunit H.